A 178-amino-acid polypeptide reads, in one-letter code: Nicotinamide-nucleotide adenylyltransferase (178 aa).

It belongs to the archaeal NMN adenylyltransferase family.

It localises to the cytoplasm. It catalyses the reaction beta-nicotinamide D-ribonucleotide + ATP + H(+) = diphosphate + NAD(+). Its pathway is cofactor biosynthesis; NAD(+) biosynthesis; NAD(+) from nicotinamide D-ribonucleotide: step 1/1. The protein is Nicotinamide-nucleotide adenylyltransferase of Pyrobaculum arsenaticum (strain DSM 13514 / JCM 11321 / PZ6).